A 452-amino-acid chain; its full sequence is 3-phosphoshikimate 1-carboxyvinyltransferase (452 aa).

The segment covering 1 to 17 (MSHAAAAKPATARKSQA) has biased composition (low complexity). The tract at residues 1–26 (MSHAAAAKPATARKSQALSGTARVPG) is disordered. 3-phosphoshikimate contacts are provided by K28, S29, and R33. Residue K28 coordinates phosphoenolpyruvate. Phosphoenolpyruvate is bound by residues G100 and R128. 3-phosphoshikimate is bound by residues S174, Q176, D327, and K354. Q176 lines the phosphoenolpyruvate pocket. Residue D327 is the Proton acceptor of the active site. Positions 358 and 409 each coordinate phosphoenolpyruvate.

This sequence belongs to the EPSP synthase family. Monomer.

The protein localises to the cytoplasm. The catalysed reaction is 3-phosphoshikimate + phosphoenolpyruvate = 5-O-(1-carboxyvinyl)-3-phosphoshikimate + phosphate. The protein operates within metabolic intermediate biosynthesis; chorismate biosynthesis; chorismate from D-erythrose 4-phosphate and phosphoenolpyruvate: step 6/7. Its function is as follows. Catalyzes the transfer of the enolpyruvyl moiety of phosphoenolpyruvate (PEP) to the 5-hydroxyl of shikimate-3-phosphate (S3P) to produce enolpyruvyl shikimate-3-phosphate and inorganic phosphate. This Mesorhizobium japonicum (strain LMG 29417 / CECT 9101 / MAFF 303099) (Mesorhizobium loti (strain MAFF 303099)) protein is 3-phosphoshikimate 1-carboxyvinyltransferase.